A 660-amino-acid chain; its full sequence is Solute carrier family 5 member 4B (660 aa).

The Cytoplasmic segment spans residues 1 to 27; sequence MASTLSPSITPQTEEPPVVPVRIQNAA. The helical transmembrane segment at 28–48 threads the bilayer; the sequence is DISVIVIYFIVVLAVGLWSMV. Over 49–54 the chain is Extracellular; that stretch reads RSNRGT. Residues 55–75 traverse the membrane as a helical segment; it reads VGGFFLAGHDMAWWPMGASLF. Residues 76–82 are Cytoplasmic-facing; that stretch reads ASNIGSN. A helical membrane pass occupies residues 83–103; the sequence is HFVGLAGTGAASGIAIAAVEW. Topologically, residues 104–105 are extracellular; sequence NA. A helical transmembrane segment spans residues 106–126; that stretch reads LLMVLVLGWVFLPIYIKAGVL. The Cytoplasmic portion of the chain corresponds to 127–142; sequence TMPEYLRKRFGGKRLQ. A helical membrane pass occupies residues 143-163; it reads IYLSVLSLFIMVALQTSSIIF. The Extracellular segment spans residues 164-166; sequence SGA. A helical membrane pass occupies residues 167-187; sequence IFIQLALGLNLYLAVFILLAI. Over 188–208 the chain is Cytoplasmic; sequence TAFYTVAGGLASVIYTDSVQT. Residues 209–229 traverse the membrane as a helical segment; the sequence is FIMLLGSLILMGFAFAEVGGY. Topologically, residues 230–277 are extracellular; sequence ESFTEKYMNAIPSVVEGDNLTISPKCYTPQPDSFHVFRDPVTGDIPWP. Residues 278–298 form a helical membrane-spanning segment; it reads GLIFGMTILAIWYWCADQVIV. The Cytoplasmic segment spans residues 299-313; sequence QRCLCGKNMSHVKAA. The chain crosses the membrane as a helical span at residues 314–334; sequence CILCGYLKLLPMFLMVMPGMI. The Extracellular segment spans residues 335–380; it reads SRILYTDKVACVVPSECEKQCGTAVGCTNYAYPTLVLELMPDGLRG. The helical transmembrane segment at 381–401 threads the bilayer; sequence LMLSVMLASLMSSLTSIFNSA. Topologically, residues 402–423 are cytoplasmic; sequence STLFTIDLYTKIRKKASERELM. The chain crosses the membrane as a helical span at residues 424-444; sequence IAGRIFGMVLIAVSILWVPLV. At 445-455 the chain is on the extracellular side; that stretch reads QVSQNGQLFHY. Residues 456-476 traverse the membrane as a helical segment; it reads IGSVSSYLGPPLGAVFMLAIF. At 477-484 the chain is on the cytoplasmic side; it reads FKRVNEQG. A helical transmembrane segment spans residues 485-505; it reads AFWGLMVGLVVGLIRLIAEFV. The Extracellular portion of the chain corresponds to 506–526; that stretch reads YGTGSCVAPSNCPKIICGVHY. A helical transmembrane segment spans residues 527–547; that stretch reads MYFAIILFFVSIIVILGVSFL. Topologically, residues 548 to 639 are cytoplasmic; the sequence is TEPIPDVHLY…DTSEKPLWRT (92 aa). A helical transmembrane segment spans residues 640-660; it reads VMNINAVLLLGVAVFVHAYFA.

It belongs to the sodium:solute symporter (SSF) (TC 2.A.21) family. In terms of tissue distribution, expressed in small intestine. Expressed in kidney.

The protein localises to the cell membrane. The catalysed reaction is D-glucose(out) + 2 Na(+)(out) = D-glucose(in) + 2 Na(+)(in). With respect to regulation, inhibited by phlorizin. Low-affinity sodium/D-glucose symporter. Generates D-glucose-induced depolarization in a pH-independent manner. This is Solute carrier family 5 member 4B from Mus musculus (Mouse).